A 405-amino-acid polypeptide reads, in one-letter code: Argininosuccinate synthase (405 aa).

Ala11 to Ser19 contributes to the ATP binding site. Tyr90 contacts L-citrulline. Gly119 lines the ATP pocket. 3 residues coordinate L-aspartate: Thr121, Asn125, and Asp126. L-citrulline is bound at residue Asn125. Residues Arg129, Ser178, Ser187, Glu263, and Tyr275 each coordinate L-citrulline.

This sequence belongs to the argininosuccinate synthase family. Type 1 subfamily. In terms of assembly, homotetramer.

The protein localises to the cytoplasm. The catalysed reaction is L-citrulline + L-aspartate + ATP = 2-(N(omega)-L-arginino)succinate + AMP + diphosphate + H(+). The protein operates within amino-acid biosynthesis; L-arginine biosynthesis; L-arginine from L-ornithine and carbamoyl phosphate: step 2/3. The protein is Argininosuccinate synthase of Legionella pneumophila (strain Paris).